The following is a 163-amino-acid chain: MLNHFNFKLKRDVTIIVPGEAFVSNKRVISTILGSCVAVVLCDESNNLIGMNHYVLVRSDLDISPDQRGRYGIYAIPMLINAMLENGANKSNLKAKLFGGTNFMAKGSVKVGLENSEFAVHTLNKYRIPILAKDFDQSKSRKIFAFPENFKVIVEYPDGTKVF.

The protein belongs to the CheD family.

The catalysed reaction is L-glutaminyl-[protein] + H2O = L-glutamyl-[protein] + NH4(+). Functionally, probably deamidates glutamine residues to glutamate on methyl-accepting chemotaxis receptors (MCPs), playing an important role in chemotaxis. The protein is Probable chemoreceptor glutamine deamidase CheD of Borrelia garinii subsp. bavariensis (strain ATCC BAA-2496 / DSM 23469 / PBi) (Borreliella bavariensis).